The sequence spans 414 residues: Histidine--tRNA ligase (414 aa).

The protein belongs to the class-II aminoacyl-tRNA synthetase family. In terms of assembly, homodimer.

The protein localises to the cytoplasm. It carries out the reaction tRNA(His) + L-histidine + ATP = L-histidyl-tRNA(His) + AMP + diphosphate + H(+). The chain is Histidine--tRNA ligase from Endomicrobium trichonymphae.